We begin with the raw amino-acid sequence, 456 residues long: uncharacterized protein (456 aa).

It belongs to the herpesviridae UL49 family.

This is an uncharacterized protein from Equus caballus (Horse).